The sequence spans 343 residues: UPF0283 membrane protein blr7254 (343 aa).

The next 3 helical transmembrane spans lie at Gly-64 to Val-84, Leu-97 to Gly-117, and Ile-214 to Leu-234.

The protein belongs to the UPF0283 family.

It is found in the cell inner membrane. The protein is UPF0283 membrane protein blr7254 of Bradyrhizobium diazoefficiens (strain JCM 10833 / BCRC 13528 / IAM 13628 / NBRC 14792 / USDA 110).